We begin with the raw amino-acid sequence, 196 residues long: Nodulation protein A (196 aa).

It belongs to the NodA family.

Its subcellular location is the cytoplasm. Its function is as follows. N-acyltransferase required for nodulation. Acts in the production of a small, heat-stable compound (Nod) that stimulates mitosis in various plant protoplasts. The chain is Nodulation protein A from Mesorhizobium plurifarium.